We begin with the raw amino-acid sequence, 239 residues long: Probable transcriptional regulatory protein BPUM_0743 (239 aa).

Belongs to the TACO1 family. YeeN subfamily.

It localises to the cytoplasm. The polypeptide is Probable transcriptional regulatory protein BPUM_0743 (Bacillus pumilus (strain SAFR-032)).